We begin with the raw amino-acid sequence, 551 residues long: Scaffold protein OPG125 (551 aa).

The protein belongs to the orthopoxvirus protein OPG125 family. As to quaternary structure, homotrimer. Self-assembles to form a layer. Interacts with OPG158 (via N-terminus); this interaction is necessary for OPG125 association with membranes.

It localises to the membrane. Scaffold protein which forms a transitory spherical honeycomb lattice providing curvature and rigidity to the convex membrane of crescent and immature virions (IV). This association occurs concomitantly with viral membrane formation. Targeted by the drug rifampicin, which prevents the formation of this lattice, and hence virus morphogenesis. In the presence of rifampicin, irregularly shaped membranes that lack the honeycomb layer accumulate around areas of electron-dense viroplasm. This layer is lost from virions during maturation from IV to mature virion (MV), through the proteolysis of OPG158 N-terminus. The sequence is that of Scaffold protein OPG125 (OPG125) from Homo sapiens (Human).